Reading from the N-terminus, the 143-residue chain is Hemoglobin subunit alpha (143 aa).

Position 1 is an N-acetylserine (Ser-1). Residues 1–143 form the Globin domain; sequence SLSATDKARV…LALALSEKYR (143 aa). His-60 contributes to the O2 binding site. A heme b-binding site is contributed by His-89.

Belongs to the globin family. In terms of assembly, heterotetramer of two alpha chains and two beta chains. Red blood cells.

Its function is as follows. Involved in oxygen transport from gills to the various peripheral tissues. The polypeptide is Hemoglobin subunit alpha (hba) (Leiostomus xanthurus (Spot)).